A 406-amino-acid polypeptide reads, in one-letter code: Protein transport protein HofC homolog (406 aa).

The next 3 helical transmembrane spans lie at 167–187, 214–234, and 379–399; these read MVLG…VPQF, QNIG…YFYL, and MMVI…LPIF.

Belongs to the GSP F family.

The protein localises to the cell inner membrane. The protein is Protein transport protein HofC homolog (hofC) of Haemophilus influenzae (strain ATCC 51907 / DSM 11121 / KW20 / Rd).